The primary structure comprises 39 residues: Beta-theraphotoxin-Cm2a (39 aa).

3 cysteine pairs are disulfide-bonded: Cys7–Cys21, Cys14–Cys26, and Cys20–Cys33. Residue Phe39 is modified to Phenylalanine amide.

Expressed by the venom gland.

The protein localises to the secreted. Its function is as follows. Inhibits mammalian voltage-gated sodium channel subtypes Nav1.5/SCN5A and Nav1.8/SCN10A by shifting the voltage dependence of channel activation to more depolarized potentials and by blocking the inward component of the sodium current. In vivo, this toxin causes erect, elevated tail, initial partial ataxia, followed by recovery over approximately 1 hour after injection and the progressive development of shaking. Although paralysis subsides, the body tremors never cease and persist until the end of the experiment. This Ceratogyrus marshalli (Straighthorned baboon tarantula) protein is Beta-theraphotoxin-Cm2a.